A 674-amino-acid chain; its full sequence is Dystrophia myotonica WD repeat-containing protein (674 aa).

A2 carries the N-acetylalanine modification. 2 disordered regions span residues G31–P92 and E103–G122. The span at P53 to P65 shows a compositional bias: pro residues. The span at A66 to A77 shows a compositional bias: low complexity. Residues S78–A90 are compositionally biased toward pro residues. Residues A107–G118 are compositionally biased toward low complexity. WD repeat units lie at residues I211–P251, V282–L321, S324–R363, G366–G409, and A413–H453. Disordered stretches follow at residues E384 to S419, L456 to T516, R532 to L573, and D637 to V674. Low complexity-rich tracts occupy residues A457–G478 and P487–P499. S495 bears the Phosphoserine mark. Gly residues-rich tracts occupy residues A500 to G509 and S550 to K563. Residue R551 is modified to Omega-N-methylarginine. Residues I601–E638 form a WD 6 repeat. The span at A642–V674 shows a compositional bias: polar residues.

As to quaternary structure, component of the USP12/DMWD/WDR48 deubiquitinating complex. Interacts with USP12; promotes its enzymatic activity. Interacts with USP46.

It localises to the cytoplasm. It is found in the nucleus. The protein resides in the perikaryon. Its subcellular location is the cell projection. The protein localises to the dendrite. In terms of biological role, regulator of the deubiquitinating USP12/DMWD/WDR48 complex. Functions as a cofactor that promotes USP12 enzymatic activity. This is Dystrophia myotonica WD repeat-containing protein from Homo sapiens (Human).